Here is a 404-residue protein sequence, read N- to C-terminus: CCA-adding enzyme (404 aa).

Residues Gly-32 and Arg-35 each contribute to the ATP site. CTP contacts are provided by Gly-32 and Arg-35. Asp-45 and Asp-47 together coordinate Mg(2+). Positions 116, 159, 162, 165, and 168 each coordinate ATP. 5 residues coordinate CTP: Arg-116, Asp-159, Arg-162, Arg-165, and Arg-168.

The protein belongs to the tRNA nucleotidyltransferase/poly(A) polymerase family. Bacterial CCA-adding enzyme type 3 subfamily. Homodimer. Requires Mg(2+) as cofactor.

The catalysed reaction is a tRNA precursor + 2 CTP + ATP = a tRNA with a 3' CCA end + 3 diphosphate. It catalyses the reaction a tRNA with a 3' CCA end + 2 CTP + ATP = a tRNA with a 3' CCACCA end + 3 diphosphate. Its function is as follows. Catalyzes the addition and repair of the essential 3'-terminal CCA sequence in tRNAs without using a nucleic acid template. Adds these three nucleotides in the order of C, C, and A to the tRNA nucleotide-73, using CTP and ATP as substrates and producing inorganic pyrophosphate. tRNA 3'-terminal CCA addition is required both for tRNA processing and repair. Also involved in tRNA surveillance by mediating tandem CCA addition to generate a CCACCA at the 3' terminus of unstable tRNAs. While stable tRNAs receive only 3'-terminal CCA, unstable tRNAs are marked with CCACCA and rapidly degraded. The sequence is that of CCA-adding enzyme from Ligilactobacillus salivarius (strain UCC118) (Lactobacillus salivarius).